The primary structure comprises 417 residues: MLKREMNIADYDPELWNAMEGEVTRQEEHIELIASENYTSPRVMQAQGSQLTNKYAEGYPGKRYYGGCEYVDVVEQLAIDRAKALFGADYANVQPHSGSQANAAVYMALLKPGDTVLGMNLAQGGHLTHGSPVNFSGKLYNIVPYGIDEAGKIDYQDIAEQAKKHKPKMIIGGFSAYSGLVDWAKMREIADSVGAYLFVDMAHVAGMIAAGVYPNPVPHAHVVTTTTHKTLAGPRGGLILAKGGDEEFYKKLNSAVFPGSQGGPLMHVIAGKAVALKEAMEPEFKVYQQQVAKNAKAMVDVFLARGYKVVSGGTENHLFLLDLVDKDITGKDADAALGRANITVNKNSVPNDPRSPFVTSGIRIGSPAITRRGFKEAEAKDLAGWMCDVLDNINDEANIEKVKQKVLDICAKFPVYA.

Residues Leu121 and 125-127 (GHL) contribute to the (6S)-5,6,7,8-tetrahydrofolate site. At Lys229 the chain carries N6-(pyridoxal phosphate)lysine. Residue 355–357 (SPF) participates in (6S)-5,6,7,8-tetrahydrofolate binding.

The protein belongs to the SHMT family. As to quaternary structure, homodimer. It depends on pyridoxal 5'-phosphate as a cofactor.

The protein resides in the cytoplasm. The enzyme catalyses (6R)-5,10-methylene-5,6,7,8-tetrahydrofolate + glycine + H2O = (6S)-5,6,7,8-tetrahydrofolate + L-serine. The protein operates within one-carbon metabolism; tetrahydrofolate interconversion. Its pathway is amino-acid biosynthesis; glycine biosynthesis; glycine from L-serine: step 1/1. In terms of biological role, catalyzes the reversible interconversion of serine and glycine with tetrahydrofolate (THF) serving as the one-carbon carrier. This reaction serves as the major source of one-carbon groups required for the biosynthesis of purines, thymidylate, methionine, and other important biomolecules. Also exhibits THF-independent aldolase activity toward beta-hydroxyamino acids, producing glycine and aldehydes, via a retro-aldol mechanism. The chain is Serine hydroxymethyltransferase from Proteus mirabilis (strain HI4320).